Reading from the N-terminus, the 226-residue chain is tRNA (guanine-N(1)-)-methyltransferase (226 aa).

Residues glycine 110 and 130–135 contribute to the S-adenosyl-L-methionine site; that span reads IGDFIL.

The protein belongs to the RNA methyltransferase TrmD family. In terms of assembly, homodimer.

The protein resides in the cytoplasm. It carries out the reaction guanosine(37) in tRNA + S-adenosyl-L-methionine = N(1)-methylguanosine(37) in tRNA + S-adenosyl-L-homocysteine + H(+). Specifically methylates guanosine-37 in various tRNAs. The chain is tRNA (guanine-N(1)-)-methyltransferase from Nitratiruptor sp. (strain SB155-2).